The primary structure comprises 80 residues: ATP synthase subunit c (80 aa).

The next 2 helical transmembrane spans lie at 11–31 and 54–74; these read IAAT…IGIL and FIVM…GLYI.

This sequence belongs to the ATPase C chain family. As to quaternary structure, F-type ATPases have 2 components, F(1) - the catalytic core - and F(0) - the membrane proton channel. F(1) has five subunits: alpha(3), beta(3), gamma(1), delta(1), epsilon(1). F(0) has three main subunits: a(1), b(2) and c(10-14). The alpha and beta chains form an alternating ring which encloses part of the gamma chain. F(1) is attached to F(0) by a central stalk formed by the gamma and epsilon chains, while a peripheral stalk is formed by the delta and b chains.

It localises to the cell membrane. F(1)F(0) ATP synthase produces ATP from ADP in the presence of a proton or sodium gradient. F-type ATPases consist of two structural domains, F(1) containing the extramembraneous catalytic core and F(0) containing the membrane proton channel, linked together by a central stalk and a peripheral stalk. During catalysis, ATP synthesis in the catalytic domain of F(1) is coupled via a rotary mechanism of the central stalk subunits to proton translocation. Its function is as follows. Key component of the F(0) channel; it plays a direct role in translocation across the membrane. A homomeric c-ring of between 10-14 subunits forms the central stalk rotor element with the F(1) delta and epsilon subunits. This chain is ATP synthase subunit c, found in Baumannia cicadellinicola subsp. Homalodisca coagulata.